We begin with the raw amino-acid sequence, 141 residues long: MTKTAKVNEIVRDWVVLDAKDKVFGRLITEIAVLLRGKHRPFYTPNVDCGDFVVVINANKVKFSGMKLEDKEYFTHSGYFGSTKSKTLQEMLEKTPEKLYHLAVRGMLPKTKLGKAMIKKLKVYRDDKHPHTAQTSKKDAK.

The protein belongs to the universal ribosomal protein uL13 family. As to quaternary structure, part of the 50S ribosomal subunit.

This protein is one of the early assembly proteins of the 50S ribosomal subunit, although it is not seen to bind rRNA by itself. It is important during the early stages of 50S assembly. The chain is Large ribosomal subunit protein uL13 from Helicobacter pylori (strain Shi470).